Consider the following 388-residue polypeptide: Transcription factor TB1 (388 aa).

In terms of domain architecture, TCP spans 115-173 (RKDRHSKISTAGGMRDRRMRLSLDVARKFFALQDMLGFDKASKTVQWLLNMSKAAIREI). Disordered regions lie at residues 180–269 (SVCE…EKNR) and 289–331 (AAGE…VGVS). Residues 187 to 201 (SSSLSVDGKQQQHSN) show a composition bias toward polar residues. Composition is skewed to basic and acidic residues over residues 210–224 (GDHK…DGKK) and 247–269 (VPDK…EKNR). The region spanning 250 to 267 (KESRAKARERARERTKEK) is the R domain. Residues 289 to 314 (AAGEDKSPTSPSNNLNHSSSTNLVST) show a composition bias toward low complexity.

In terms of assembly, interacts with MADS57. As to expression, expressed in the axillary bud of the first formed leaf node. Expressed in axillary buds, shoot apical meristem, young leaves, vascular tissues and the tips of crown roots.

Its subcellular location is the nucleus. Probable transcription factor that functions as a negative regulator of lateral branching, presumably through its expression in axillary buds. Involved in the fine tuning of shoot branching. May function as an integrator of multiple signaling pathways to regulate the development of axillary buds. Works partially downstream of strigolactones to inhibit bud outgrowth. Binds to MADS57 to suppress the negative regulation of D14 by MADS57 and balance the expression of D14 for tillering. The sequence is that of Transcription factor TB1 from Oryza sativa subsp. japonica (Rice).